The following is a 179-amino-acid chain: ATP synthase subunit delta, chloroplastic (179 aa).

This sequence belongs to the ATPase delta chain family. In terms of assembly, F-type ATPases have 2 components, F(1) - the catalytic core - and F(0) - the membrane proton channel. F(1) has five subunits: alpha(3), beta(3), gamma(1), delta(1), epsilon(1). CF(0) has four main subunits: a(1), b(1), b'(1) and c(10-14). The alpha and beta chains form an alternating ring which encloses part of the gamma chain. F(1) is attached to F(0) by a central stalk formed by the gamma and epsilon chains, while a peripheral stalk is formed by the delta, b and b' chains.

It localises to the plastid. The protein localises to the chloroplast thylakoid membrane. Its function is as follows. F(1)F(0) ATP synthase produces ATP from ADP in the presence of a proton or sodium gradient. F-type ATPases consist of two structural domains, F(1) containing the extramembraneous catalytic core and F(0) containing the membrane proton channel, linked together by a central stalk and a peripheral stalk. During catalysis, ATP synthesis in the catalytic domain of F(1) is coupled via a rotary mechanism of the central stalk subunits to proton translocation. In terms of biological role, this protein is part of the stalk that links CF(0) to CF(1). It either transmits conformational changes from CF(0) to CF(1) or is implicated in proton conduction. This chain is ATP synthase subunit delta, chloroplastic, found in Ochrosphaera neapolitana.